We begin with the raw amino-acid sequence, 381 residues long: Chitin deacetylase 8 (381 aa).

The N-terminal stretch at 1-18 is a signal peptide; it reads MKRLSVLCSLLLVAAALG. 2 cysteine pairs are disulfide-bonded: cysteine 27/cysteine 39 and cysteine 32/cysteine 37. Zn(2+) is bound by residues aspartate 63, histidine 117, and histidine 121. 5 disulfides stabilise this stretch: cysteine 86–cysteine 335, cysteine 211–cysteine 216, cysteine 240–cysteine 246, cysteine 343–cysteine 365, and cysteine 348–cysteine 368. N-linked (GlcNAc...) asparagine glycosylation occurs at asparagine 171.

Belongs to the carbohydrate esterase 4 (CE4) family. Zn(2+) serves as cofactor. Strongly expressed in the midgut. Has little or no expression in other tissues tested.

It is found in the secreted. It carries out the reaction [(1-&gt;4)-N-acetyl-beta-D-glucosaminyl](n) + n H2O = chitosan + n acetate. In terms of biological role, hydrolyzes the N-acetamido groups of N-acetyl-D-glucosamine (GlcNAc) residues in chitin. Shows activity towards the chitinous oligomers GlcNAc(3), GlcNAc(4), GlcNAc(5) and GlcNAc(6), but not GlcNAc or GlcNAc(2). Requires the substrate to occupy subsites 0, +1, and +2 for optimum catalysis. This Bombyx mori (Silk moth) protein is Chitin deacetylase 8.